Reading from the N-terminus, the 1338-residue chain is Aldehyde oxidase (1338 aa).

The region spanning 5–92 (SELLFYVNGR…GAAVTTVEGI (88 aa)) is the 2Fe-2S ferredoxin-type domain. Residues C44, C49, C52, and C74 each contribute to the [2Fe-2S] cluster site. Position 113 (Q113) interacts with Mo-molybdopterin. [2Fe-2S] cluster contacts are provided by C114, C117, C149, and C151. C151 serves as a coordination point for Mo-molybdopterin. Positions 236-421 (FGSERMMWFS…VSVNIPYSRK (186 aa)) constitute an FAD-binding PCMH-type domain. Residues 264–271 (VIMGNTSV), A345, S354, H358, D367, and L411 contribute to the FAD site. Mo-molybdopterin contacts are provided by residues 806–807 (AF) and M1047. S1068 carries the post-translational modification Phosphoserine. Mo-molybdopterin is bound by residues 1088–1091 (GSVV), Q1203, and L1268. The active-site Proton acceptor; for azaheterocycle hydroxylase activity is the E1270.

This sequence belongs to the xanthine dehydrogenase family. In terms of assembly, homodimer. Requires [2Fe-2S] cluster as cofactor. The cofactor is FAD. It depends on Mo-molybdopterin as a cofactor. Abundant in liver, expressed in adipose tissue and at lower levels in lung, skeletal muscle, pancreas. In contrast to mice, no significant gender difference in AOX1 expression level (at protein level).

It localises to the cytoplasm. The catalysed reaction is an aldehyde + O2 + H2O = a carboxylate + H2O2 + H(+). The enzyme catalyses retinal + O2 + H2O = retinoate + H2O2 + H(+). Its activity is regulated as follows. Is very potently inhibited by raloxifene. Also inhibited by estradiol, ethinyl estradiol, hydralazine, menadione, isovanillin and thioridazine. Not inhibited by allopurinol, a xanthine dehydrogenase potent inhibitor. In terms of biological role, oxidase with broad substrate specificity, oxidizing aromatic azaheterocycles, such as N1-methylnicotinamide, N-methylphthalazinium and phthalazine, as well as aldehydes, such as benzaldehyde, retinal, pyridoxal, and vanillin. Plays a key role in the metabolism of xenobiotics and drugs containing aromatic azaheterocyclic substituents. Participates in the bioactivation of prodrugs such as famciclovir, catalyzing the oxidation step from 6-deoxypenciclovir to penciclovir, which is a potent antiviral agent. Is probably involved in the regulation of reactive oxygen species homeostasis. May be a prominent source of superoxide generation via the one-electron reduction of molecular oxygen. May also catalyze nitric oxide (NO) production via the reduction of nitrite to NO with NADH or aldehyde as electron donor. May play a role in adipogenesis. The polypeptide is Aldehyde oxidase (Homo sapiens (Human)).